The primary structure comprises 843 residues: MAEKSSFFVHFSCLLLLLTIIITCGEGVRNPVRPRSSERRALMDGQDLSRPLKLTFGGPSRNWTDAIPIGNGRLGATIWGGVSSEILNINEDTIWTGVPADYTNQKAPEALAEVRRLVDERNYAEATSEAVKLSGQPSDVYQIVGDLNLEFDSSHRKYTQASYRRELDLETAVAKVSYSVGAVDFSREFFASNPDQVIIAKIYASKPGSLSFKVSFDSELHHHSETNPKANQILMRGSCRPKRLPVNLKKSINATNIPYDDHKGLQFASILEVRVSNGGSVSSLGGKKLSVEKADWAVLLLAASSNFDGPFTMPVDSKIDPAKECVNRISSVQKYSYSDLYARHLGDYQKLFNRVSLHLSGSSTNETVQQATSTAERVRSFKTDQDPSLVELLFQYGRYLLISSSRPGTQVANLQGIWNRDIQPPWDGAPHLNINLQMNYWHSLPGNIRECQEPLFDYMSALAINGRKTAQVNYGASGWVAHQVSDIWAKTSPDRGEAVWALWPMGGAWLCTHAWEHYTYTMDKEFLKKKGYPLLEGCTSFLLDWLIKGKDGFLQTNPSTSPEHMFTAPIGKPASVSYSSTMDIAIIKEVFADIVSASEILGKTNDTLIGKVIAAQAKLPPTRISKDGSIREWAEDFEDPEVHHRHVSHLFGLFPGHTITVEKSPELAKAVEATLKKRGEEGPGWSTTWKAALWARLHNSEHAYRMVTHIFDLVDPLNERNYEGGLYSNMFTAHPPFQIDANFGFAAAVAEMLVQSTTKDLYLLPALPADKWPNGIVNGLRARGGVTVSIKWMEGNLVEFGLWSEQIVSTRIVYRGISAAAELLPGKVFTFDKDLRCIRTDKL.

An N-terminal signal peptide occupies residues Met1–Gly27. Residues Asn62, Asn253, Asn365, and Asn605 are each glycosylated (N-linked (GlcNAc...) asparagine).

This sequence belongs to the glycosyl hydrolase 95 family. In terms of tissue distribution, ubiquitous. Highest expression in vascular tissues, leaf trichomes, root elongation zone and emerging lateral roots.

The protein localises to the secreted. It is found in the extracellular space. Its subcellular location is the apoplast. It carries out the reaction an alpha-L-fucoside + H2O = L-fucose + an alcohol. In terms of biological role, hydrolyzes alpha-1,2-linked fucose. Also active on fucosylated xyloglucan oligosaccharides. No activity with 3-fucosyllactose, p-nitrophenyl-alpha-I-fucopyranoside, lacto-N-fucopentaose II, lacto-N-fucopentaose III or alpha 1,6-fucosylated chitopentaose. Involved in apoplastic xyloglucan metabolism. This is Alpha-L-fucosidase 2 (FUC95A) from Arabidopsis thaliana (Mouse-ear cress).